The sequence spans 120 residues: Large ribosomal subunit protein uL18 (120 aa).

The protein belongs to the universal ribosomal protein uL18 family. Part of the 50S ribosomal subunit; part of the 5S rRNA/L5/L18/L25 subcomplex. Contacts the 5S and 23S rRNAs.

Functionally, this is one of the proteins that bind and probably mediate the attachment of the 5S RNA into the large ribosomal subunit, where it forms part of the central protuberance. The sequence is that of Large ribosomal subunit protein uL18 from Rippkaea orientalis (strain PCC 8801 / RF-1) (Cyanothece sp. (strain PCC 8801)).